The sequence spans 78 residues: Translation initiation factor IF-1 (78 aa).

The S1-like domain occupies 4-78; the sequence is KFNNQAKQDK…LKLGRIIGRK (75 aa).

Belongs to the IF-1 family. In terms of assembly, component of the 30S ribosomal translation pre-initiation complex which assembles on the 30S ribosome in the order IF-2 and IF-3, IF-1 and N-formylmethionyl-tRNA(fMet); mRNA recruitment can occur at any time during PIC assembly.

The protein localises to the cytoplasm. One of the essential components for the initiation of protein synthesis. Stabilizes the binding of IF-2 and IF-3 on the 30S subunit to which N-formylmethionyl-tRNA(fMet) subsequently binds. Helps modulate mRNA selection, yielding the 30S pre-initiation complex (PIC). Upon addition of the 50S ribosomal subunit IF-1, IF-2 and IF-3 are released leaving the mature 70S translation initiation complex. The polypeptide is Translation initiation factor IF-1 (Mycoplasma pneumoniae (strain ATCC 29342 / M129 / Subtype 1) (Mycoplasmoides pneumoniae)).